A 247-amino-acid polypeptide reads, in one-letter code: Carboxy-S-adenosyl-L-methionine synthase (247 aa).

Residues Tyr-39, 64–66, 89–90, 117–118, Asn-132, and Arg-199 each bind S-adenosyl-L-methionine; these read GCS, DN, and DI.

Belongs to the class I-like SAM-binding methyltransferase superfamily. Cx-SAM synthase family. Homodimer.

The catalysed reaction is prephenate + S-adenosyl-L-methionine = carboxy-S-adenosyl-L-methionine + 3-phenylpyruvate + H2O. Its function is as follows. Catalyzes the conversion of S-adenosyl-L-methionine (SAM) to carboxy-S-adenosyl-L-methionine (Cx-SAM). In Escherichia coli O127:H6 (strain E2348/69 / EPEC), this protein is Carboxy-S-adenosyl-L-methionine synthase.